Reading from the N-terminus, the 984-residue chain is Detocs histidine-protein kinase DtcA (984 aa).

His645 carries the post-translational modification Phosphohistidine; by autocatalysis.

In terms of processing, autophosphorylated.

The catalysed reaction is ATP + protein L-histidine = ADP + protein N-phospho-L-histidine.. In terms of biological role, sensor-kinase member of the two-component regulatory system Detocs that confers resistance to bacteriophage. When the system (DtcA-DtcB-DtcC) is expressed in a susceptible E.coli (strain MG1655) it confers resistance to bacteriophages T2, T4, T5, T6 and SECphi27. Detocs inhibits T5 infection leading to growth arrest but not complete cell lysis, during SECphi27 infection leads to cell lysis. DtcA (this subunit) probably autophosphorylates upon sensing viral infection, and subsequently transfers the phosphate signal to DtcC which activates it, leading to an antiviral defense; DtcB may scavenge phosphorylation signals from accidental activation of DtcA. In Vibrio alginolyticus, this protein is Detocs histidine-protein kinase DtcA.